The primary structure comprises 325 residues: tRNA dimethylallyltransferase (325 aa).

ATP is bound at residue 17–24 (GPTASGKT). Position 19 to 24 (19 to 24 (TASGKT)) interacts with substrate. Interaction with substrate tRNA stretches follow at residues 42-45 (DSAL), 166-170 (QRIQR), 251-256 (RCVGYR), and 284-291 (KRQITWLR).

Belongs to the IPP transferase family. In terms of assembly, monomer. Mg(2+) serves as cofactor.

It carries out the reaction adenosine(37) in tRNA + dimethylallyl diphosphate = N(6)-dimethylallyladenosine(37) in tRNA + diphosphate. Catalyzes the transfer of a dimethylallyl group onto the adenine at position 37 in tRNAs that read codons beginning with uridine, leading to the formation of N6-(dimethylallyl)adenosine (i(6)A). In Burkholderia multivorans (strain ATCC 17616 / 249), this protein is tRNA dimethylallyltransferase.